The primary structure comprises 143 residues: Adrenodoxin, mitochondrial (143 aa).

The transit peptide at 1–19 directs the protein to the mitochondrion; the sequence is CSAVAVRTLRPLSLSARAA. Residues 26-130 enclose the 2Fe-2S ferredoxin-type domain; that stretch reads ITVHFINRDG…NMTVRVPEAV (105 aa). Positions 65, 71, 74, and 111 each coordinate [2Fe-2S] cluster.

The protein belongs to the adrenodoxin/putidaredoxin family. Requires [2Fe-2S] cluster as cofactor.

Its subcellular location is the mitochondrion matrix. Functionally, essential for the synthesis of various steroid hormones. Participates in the reduction of mitochondrial cytochrome P450 for steroidogenesis. Transfers electrons from adrenodoxin reductase to CYP11A1, a cytochrome P450 that catalyzes cholesterol side-chain cleavage. Does not form a ternary complex with adrenodoxin reductase and CYP11A1 but shuttles between the two enzymes to transfer electrons. The chain is Adrenodoxin, mitochondrial (FDX1) from Gallus gallus (Chicken).